The following is a 385-amino-acid chain: Rubredoxin-NAD(+) reductase (385 aa).

Residues 8 to 11 (AGTA), 32 to 33 (SR), isoleucine 79, glutamate 156, aspartate 275, and isoleucine 293 each bind FAD.

Belongs to the FAD-dependent oxidoreductase family. In terms of assembly, homodimer. FAD is required as a cofactor.

Its subcellular location is the cytoplasm. It carries out the reaction 2 reduced [rubredoxin] + NAD(+) + H(+) = 2 oxidized [rubredoxin] + NADH. It functions in the pathway hydrocarbon metabolism; alkane degradation. Its function is as follows. Involved in the hydrocarbon hydroxylating system, which transfers electrons from NADH to rubredoxin reductase and then through rubredoxin to alkane 1 monooxygenase. This chain is Rubredoxin-NAD(+) reductase (alkT), found in Ectopseudomonas oleovorans (Pseudomonas oleovorans).